The primary structure comprises 1040 residues: Protocadherin-10 (1040 aa).

Residues 1–18 (MIVLLLFALLWMVEGVFS) form the signal peptide. Cadherin domains are found at residues 19 to 122 (QLHY…PPSF), 123 to 250 (PEPD…VPAF), 251 to 358 (DQPV…APEI), 359 to 463 (SFST…APRF), 464 to 574 (SQPV…APAI), and 582 to 690 (NGTP…GGGG). The Extracellular portion of the chain corresponds to 19 to 715 (QLHYTVQEEQ…GGGETSLDLT (697 aa)). A compositionally biased stretch (gly residues) spans 207 to 223 (GGGGGVGEGGGGGGGAG). Positions 207–228 (GGGGGVGEGGGGGGGAGLPPQQ) are disordered. Asn273 carries N-linked (GlcNAc...) asparagine glycosylation. Asn557 is a glycosylation site (N-linked (GlcNAc...) asparagine). Over residues 686-697 (QGGGGSGGGGSG) the composition is skewed to gly residues. The interval 686–708 (QGGGGSGGGGSGEHQRPSRSGGG) is disordered. A helical transmembrane segment spans residues 716-736 (LILIIALGSVSFIFLLAMIVL). At 737 to 1040 (AVRCQKEKKL…PPYLTRKRIC (304 aa)) the chain is on the cytoplasmic side. The tract at residues 899–927 (AFQEADIVSSKDSGHGDSEQGDSDHDATN) is disordered. Over residues 910–926 (DSGHGDSEQGDSDHDAT) the composition is skewed to basic and acidic residues.

Moderately expressed in all regions of the brain examined, as well as in testis and ovary, and low expression in all other tissues tested.

The protein localises to the cell membrane. Functionally, potential calcium-dependent cell-adhesion protein. In terms of biological role, (Microbial infection) Acts as a receptor for Western equine encephalitis virus. The polypeptide is Protocadherin-10 (PCDH10) (Homo sapiens (Human)).